We begin with the raw amino-acid sequence, 129 residues long: KVYGRCELAAAMKRLGLDNFRGYSLGNWVCAAKFESNFNTHATNRNTDGSTDYGILQINSRWWCNDGRTPGSRNLCNIPCSALLSSDTIASVNCAKKIVSDGNGMNAWVAWRKRCKGTDVNAWTRGCRL.

Positions 1–129 constitute a C-type lysozyme domain; sequence KVYGRCELAA…VNAWTRGCRL (129 aa). Cystine bridges form between cysteine 6–cysteine 127, cysteine 30–cysteine 115, cysteine 64–cysteine 80, and cysteine 76–cysteine 94. Catalysis depends on residues glutamate 35 and aspartate 52.

Belongs to the glycosyl hydrolase 22 family. In terms of assembly, monomer.

Its subcellular location is the secreted. It catalyses the reaction Hydrolysis of (1-&gt;4)-beta-linkages between N-acetylmuramic acid and N-acetyl-D-glucosamine residues in a peptidoglycan and between N-acetyl-D-glucosamine residues in chitodextrins.. Functionally, lysozymes have primarily a bacteriolytic function; those in tissues and body fluids are associated with the monocyte-macrophage system and enhance the activity of immunoagents. This chain is Lysozyme C (LYZ), found in Syrmaticus soemmerringii (Copper pheasant).